We begin with the raw amino-acid sequence, 250 residues long: Nuclear transcription factor Y subunit C-4 (250 aa).

Low complexity predominate over residues 1–10 (MDNNNNNNNQ). Disordered stretches follow at residues 1–35 (MDNN…PSGS) and 209–250 (GVYA…DSQG). A compositionally biased stretch (polar residues) spans 214-225 (PPSQAWQSVWQN). Over residues 227–242 (AGGGDDVSYGSGGSSG) the composition is skewed to gly residues.

The protein belongs to the NFYC/HAP5 subunit family. In terms of assembly, heterotrimeric transcription factor composed of three components, NF-YA, NF-YB and NF-YC. NF-YB and NF-YC must interact and dimerize for NF-YA association and DNA binding. Ubiquitous. Present in etiolated seedlings.

It is found in the nucleus. In terms of biological role, stimulates the transcription of various genes by recognizing and binding to a CCAAT motif in promoters. Involved in the abscisic acid (ABA) signaling pathway. This Arabidopsis thaliana (Mouse-ear cress) protein is Nuclear transcription factor Y subunit C-4 (NFYC4).